We begin with the raw amino-acid sequence, 398 residues long: Bifunctional enzyme IspD/IspF (398 aa).

Positions 1–234 (MPSSKRTAAI…ARLAAALGDI (234 aa)) are 2-C-methyl-D-erythritol 4-phosphate cytidylyltransferase. The segment at 235 to 398 (RTGTGYDVHA…LPWNDKGRDT (164 aa)) is 2-C-methyl-D-erythritol 2,4-cyclodiphosphate synthase. The a divalent metal cation site is built by Asp241 and His243. 4-CDP-2-C-methyl-D-erythritol 2-phosphate is bound by residues 241 to 243 (DVH) and 267 to 268 (HS). His275 provides a ligand contact to a divalent metal cation. Residues 289-291 (DIG), 365-368 (TTSE), Phe372, and Arg375 each bind 4-CDP-2-C-methyl-D-erythritol 2-phosphate.

It in the N-terminal section; belongs to the IspD/TarI cytidylyltransferase family. IspD subfamily. The protein in the C-terminal section; belongs to the IspF family. Requires a divalent metal cation as cofactor.

It catalyses the reaction 2-C-methyl-D-erythritol 4-phosphate + CTP + H(+) = 4-CDP-2-C-methyl-D-erythritol + diphosphate. The enzyme catalyses 4-CDP-2-C-methyl-D-erythritol 2-phosphate = 2-C-methyl-D-erythritol 2,4-cyclic diphosphate + CMP. It participates in isoprenoid biosynthesis; isopentenyl diphosphate biosynthesis via DXP pathway; isopentenyl diphosphate from 1-deoxy-D-xylulose 5-phosphate: step 2/6. The protein operates within isoprenoid biosynthesis; isopentenyl diphosphate biosynthesis via DXP pathway; isopentenyl diphosphate from 1-deoxy-D-xylulose 5-phosphate: step 4/6. Bifunctional enzyme that catalyzes the formation of 4-diphosphocytidyl-2-C-methyl-D-erythritol from CTP and 2-C-methyl-D-erythritol 4-phosphate (MEP) (IspD), and catalyzes the conversion of 4-diphosphocytidyl-2-C-methyl-D-erythritol 2-phosphate (CDP-ME2P) to 2-C-methyl-D-erythritol 2,4-cyclodiphosphate (ME-CPP) with a corresponding release of cytidine 5-monophosphate (CMP) (IspF). The chain is Bifunctional enzyme IspD/IspF from Nitrobacter winogradskyi (strain ATCC 25391 / DSM 10237 / CIP 104748 / NCIMB 11846 / Nb-255).